The primary structure comprises 59 residues: Large ribosomal subunit protein bL32 (59 aa).

Residues M1 to A21 form a disordered region.

Belongs to the bacterial ribosomal protein bL32 family.

This chain is Large ribosomal subunit protein bL32, found in Magnetococcus marinus (strain ATCC BAA-1437 / JCM 17883 / MC-1).